Here is a 131-residue protein sequence, read N- to C-terminus: Large ribosomal subunit protein bL17 (131 aa).

This sequence belongs to the bacterial ribosomal protein bL17 family. In terms of assembly, part of the 50S ribosomal subunit. Contacts protein L32.

The protein is Large ribosomal subunit protein bL17 of Janthinobacterium sp. (strain Marseille) (Minibacterium massiliensis).